Here is a 192-residue protein sequence, read N- to C-terminus: CASP-like protein 4C1 (192 aa).

The span at 1–11 (MRSPQSLRNGE) shows a compositional bias: polar residues. Residues 1–23 (MRSPQSLRNGETPSPSPRPPRFP) are disordered. Residues 1–40 (MRSPQSLRNGETPSPSPRPPRFPTPHFHSTVSLQKLKRFN) lie on the Cytoplasmic side of the membrane. Pro residues predominate over residues 14 to 23 (SPSPRPPRFP). A helical membrane pass occupies residues 41-61 (LLILVFRLSTFCFSLASSVFM). Topologically, residues 62 to 75 (LTNPTWYHFDAFRY) are extracellular. Residues 76–96 (VFAANAIVAIYSLFEMAASVW) form a helical membrane-spanning segment. The Cytoplasmic segment spans residues 97–107 (EISRGNTLFPE). The chain crosses the membrane as a helical span at residues 108-128 (ILQVWFDFGHDQVFAYLLLSA). Over 129–156 (DSAATALAKTLKGGDTCAASNAFCVQSY) the chain is Extracellular. The helical transmembrane segment at 157–177 (IAIALGFAGFLFLGLSSLLSG) threads the bilayer. The Cytoplasmic portion of the chain corresponds to 178–192 (FRVVCFLINGSRFYV).

Belongs to the Casparian strip membrane proteins (CASP) family. As to quaternary structure, homodimer and heterodimers.

It is found in the cell membrane. The sequence is that of CASP-like protein 4C1 from Ricinus communis (Castor bean).